The primary structure comprises 643 residues: Inner kinetochore subunit cnp3 (643 aa).

Disordered regions lie at residues 55 to 209 and 224 to 386; these read SIHL…AFPD and SIKD…QSDS. 2 stretches are compositionally biased toward low complexity: residues 85 to 97 and 104 to 125; these read AASD…SSSD and DIPS…GSSG. A compositionally biased stretch (basic and acidic residues) spans 166–185; sequence DFSRIKASPDRKKFEPRRST. 3 stretches are compositionally biased toward polar residues: residues 235 to 261, 295 to 304, and 313 to 322; these read YIQT…PSKQ, LNRSLANNSQ, and KPLQESSINS. 2 stretches are compositionally biased toward basic residues: residues 332-341 and 360-370; these read VKRKRGRPRK and GAKKPAIRNAK. Positions 333–345 form a DNA-binding region, a.T hook; it reads KRKRGRPRKNKLE.

The protein belongs to the CENP-C/MIF2 family. In terms of assembly, component of the inner kinetochore constitutive centromere-associated network (CCAN) (also known as central kinetochore Sim4 complex in fission yeast), which is composed of at least cnl2, cnp3, cnp20, fta1, fta2, fta3, fta4, fta6, fta7, mal2, mhf1, mhf2, mis6, mis15, mis17, sim4 and wip1.

The protein localises to the nucleus. The protein resides in the nucleoplasm. Functionally, component of the kinetochore, a multiprotein complex that assembles on centromeric DNA and attaches chromosomes to spindle microtubules, mediating chromosome segregation and sister chromatid segregation during meiosis and mitosis. Component of the inner kinetochore constitutive centromere-associated network (CCAN), which serves as a structural platform for outer kinetochore assembly. The protein is Inner kinetochore subunit cnp3 (cnp3) of Schizosaccharomyces pombe (strain 972 / ATCC 24843) (Fission yeast).